A 710-amino-acid polypeptide reads, in one-letter code: DNA ligase (710 aa).

Residues 1–26 form a disordered region; the sequence is MPEDAIGQQVPPEQEAAGAEPTSAAR. NAD(+) is bound by residues 53–57, 102–103, and E132; these read DAEFD and SL. Residue K134 is the N6-AMP-lysine intermediate of the active site. R155, E196, K312, and K336 together coordinate NAD(+). Residues C430, C433, C449, and C455 each contribute to the Zn(2+) site. Residues 619-708 enclose the BRCT domain; it reads EGPRPLEGMT…PDAAREVARV (90 aa).

The protein belongs to the NAD-dependent DNA ligase family. LigA subfamily. Mg(2+) is required as a cofactor. It depends on Mn(2+) as a cofactor.

It carries out the reaction NAD(+) + (deoxyribonucleotide)n-3'-hydroxyl + 5'-phospho-(deoxyribonucleotide)m = (deoxyribonucleotide)n+m + AMP + beta-nicotinamide D-nucleotide.. In terms of biological role, DNA ligase that catalyzes the formation of phosphodiester linkages between 5'-phosphoryl and 3'-hydroxyl groups in double-stranded DNA using NAD as a coenzyme and as the energy source for the reaction. It is essential for DNA replication and repair of damaged DNA. The sequence is that of DNA ligase from Salinispora arenicola (strain CNS-205).